The chain runs to 1369 residues: Phosphoribosylformylglycinamidine synthase (1369 aa).

Disordered stretches follow at residues 321-352 and 373-400; these read HPTAISPFPGASTGAGGEIRDEGATGRGAKPK and ENARDTAQPAAQRNPGDTAPGPVGKPDR. 330-341 contributes to the ATP binding site; sequence GASTGAGGEIRD. ATP is bound at residue Ala721. Positions 722, 761, 765, and 934 each coordinate Mg(2+). Ser936 provides a ligand contact to ATP. A Glutamine amidotransferase type-1 domain is found at 1116-1369; that stretch reads MAILREQGVN…MFRNARKQMG (254 aa). Catalysis depends on Cys1209, which acts as the Nucleophile. Catalysis depends on residues His1330 and Glu1332.

This sequence in the N-terminal section; belongs to the FGAMS family. As to quaternary structure, monomer.

It is found in the cytoplasm. It catalyses the reaction N(2)-formyl-N(1)-(5-phospho-beta-D-ribosyl)glycinamide + L-glutamine + ATP + H2O = 2-formamido-N(1)-(5-O-phospho-beta-D-ribosyl)acetamidine + L-glutamate + ADP + phosphate + H(+). Its pathway is purine metabolism; IMP biosynthesis via de novo pathway; 5-amino-1-(5-phospho-D-ribosyl)imidazole from N(2)-formyl-N(1)-(5-phospho-D-ribosyl)glycinamide: step 1/2. Functionally, phosphoribosylformylglycinamidine synthase involved in the purines biosynthetic pathway. Catalyzes the ATP-dependent conversion of formylglycinamide ribonucleotide (FGAR) and glutamine to yield formylglycinamidine ribonucleotide (FGAM) and glutamate. This Ralstonia nicotianae (strain ATCC BAA-1114 / GMI1000) (Ralstonia solanacearum) protein is Phosphoribosylformylglycinamidine synthase.